Reading from the N-terminus, the 1080-residue chain is Adenylate cyclase type 7 (1080 aa).

At 1–33 the chain is on the cytoplasmic side; that stretch reads MPAKGRYFLNEGEEGPDQDALYEKYQLTSQHGP. Helical transmembrane passes span 34 to 54, 63 to 83, 95 to 117, 122 to 142, 147 to 167, and 176 to 196; these read LLLT…IIAF, QAIL…SVLM, ALAL…DAWT, AWEQ…LLPF, AVAV…SLMG, and VGLQ…TGAF. Residues 197–594 are Cytoplasmic-facing; the sequence is HKHQMQDASR…YRLAPIPRAR (398 aa). The 128-residue stretch at 279–406 folds into the Guanylate cyclase 1 domain; that stretch reads SILYADIVGF…HDVSLANRME (128 aa). 3 residues coordinate Mg(2+): Asp284, Ile285, and Asp328. ATP is bound by residues 284-289, 326-328, and Arg372; these read DIVGFT and LGD. The disordered stretch occupies residues 454-474; the sequence is DPRSQQPPPPSQHLPRPKGDA. Positions 477-482 are mediates regulation of adenylate cyclase activity by C5 alpha-induced G- beta and gamma pathway; it reads KMRASV. A mediates regulation of adenylate cyclase activity by sphingosine 1-phosphate-induced G alpha 13 pathway region spans residues 491–499; it reads WGAARPFAH. The disordered stretch occupies residues 504 to 546; it reads ESVSSGETHVPNGRRPKSVPQRHRRTPDRSMSPKGRSEDDSYD. The segment at 506 to 584 is modulates adenylate cyclase activity by modulating the binding of G(s)alpha to the high-affinity G(s)alpha binding site in 7C1a/7C2; that stretch reads VSSGETHVPN…IFLEKGFERE (79 aa). A compositionally biased stretch (basic residues) spans 515–529; it reads NGRRPKSVPQRHRRT. The next 3 helical transmembrane spans lie at 595-615, 620-640, and 669-688; these read HDFA…VLLM, ALGV…GLCF, and LTLA…INLP. The N-linked (GlcNAc...) asparagine glycan is linked to Asn701. Transmembrane regions (helical) follow at residues 718–737 and 746–773; these read PLPY…SVFL and VLLT…CGQG. N-linked (GlcNAc...) asparagine glycosylation is found at Asn776 and Asn781. A helical membrane pass occupies residues 794–814; sequence DLKTMTNFYLVLFYITLLTLS. The Cytoplasmic segment spans residues 815 to 1080; it reads RQIDYYCRLD…TAKFQGLGLN (266 aa). In terms of domain architecture, Guanylate cyclase 2 spans 879–1023; the sequence is CVMFASVPDF…NTVNVASRME (145 aa). Residues Lys931, 1010 to 1012, 1017 to 1021, and Lys1057 contribute to the ATP site; these read DIW and NVASR.

Belongs to the adenylyl cyclase class-4/guanylyl cyclase family. It depends on Mg(2+) as a cofactor. Mn(2+) serves as cofactor. In terms of processing, phosphorylated by PRKCD.

Its subcellular location is the membrane. It catalyses the reaction ATP = 3',5'-cyclic AMP + diphosphate. Its activity is regulated as follows. Activated by the G protein alpha subunit. Activated by the G protein beta and gamma subunit complex. Activated by GNA13 and GNA12. Ethanol and phorbol 12,13-dibutanoate significantly potentiate adenylate cyclase activity generated in response to the activation of the prostanoid receptor by the agonist prostaglandin E1(1-) in a PKC-dependent manner. Inhibited by lithium. Its function is as follows. Catalyzes the formation of cAMP in response to activation of G protein-coupled receptors. Functions in signaling cascades activated namely by thrombin and sphingosine 1-phosphate and mediates regulation of cAMP synthesis through synergistic action of the stimulatory G alpha protein with GNA13. Also, during inflammation, mediates zymosan-induced increase intracellular cAMP, leading to protein kinase A pathway activation in order to modulate innate immune responses through heterotrimeric G proteins G(12/13). Functions in signaling cascades activated namely by dopamine and C5 alpha chain and mediates regulation of cAMP synthesis through synergistic action of the stimulatory G protein with G beta:gamma complex. Functions, through cAMP response regulation, to keep inflammation under control during bacterial infection by sensing the presence of serum factors, such as the bioactive lysophospholipid (LPA) that regulate LPS-induced TNF-alpha production. However, it is also required for the optimal functions of B and T cells during adaptive immune responses by regulating cAMP synthesis in both B and T cells. The chain is Adenylate cyclase type 7 from Homo sapiens (Human).